Consider the following 529-residue polypeptide: Peptide chain release factor 3 (529 aa).

The region spanning 11 to 280 (AKRRTFAIIS…GLVEWAPAPM (270 aa)) is the tr-type G domain. GTP contacts are provided by residues 20–27 (SHPDAGKT), 88–92 (DTPGH), and 142–145 (NKLD).

It belongs to the TRAFAC class translation factor GTPase superfamily. Classic translation factor GTPase family. PrfC subfamily.

It is found in the cytoplasm. Its function is as follows. Increases the formation of ribosomal termination complexes and stimulates activities of RF-1 and RF-2. It binds guanine nucleotides and has strong preference for UGA stop codons. It may interact directly with the ribosome. The stimulation of RF-1 and RF-2 is significantly reduced by GTP and GDP, but not by GMP. The protein is Peptide chain release factor 3 of Shigella boydii serotype 18 (strain CDC 3083-94 / BS512).